A 423-amino-acid chain; its full sequence is Tegument protein UL43 (423 aa).

Residues 1–12 show a composition bias toward polar residues; the sequence is MEKTPAETTAVS. Positions 1–46 are disordered; that stretch reads MEKTPAETTAVSAGNVPRDSIPCITNVSADTRGRTRPSRPATVPQR.

Belongs to the herpesviridae US22 family.

It is found in the virion tegument. This Homo sapiens (Human) protein is Tegument protein UL43 (UL43).